The primary structure comprises 749 residues: MSGSHTPACGPFSALTPSIWPQEILAKYTQKEESAEQPEFYYDEFGFRVYKEEGDEPGSSLLANSPLMEDAPQRLRWQAHLEFTHNHDVGDLTWDKIAVSLPRSEKLRSLVLAGIPHGMRPQLWMRLSGALQKKRNSELSYREIVKNSSNDETIAAKQIEKDLLRTMPSNACFASMGSIGVPRLRRVLRALAWLYPEIGYCQGTGMVAACLLLFLEEEDAFWMMSAIIEDLLPASYFSTTLLGVQTDQRVLRHLIVQYLPRLDKLLQEHDIELSLITLHWFLTAFASVVDIKLLLRIWDLFFYEGSRVLFQLTLGMLHLKEEELIQSENSASIFNTLSDIPSQMEDAELLLGVAMRLAGSLTDVAVETQRRKHLAYLIADQGQLLGAGTLTNLSQVVRRRTQRRKSTITALLFGEDDLEALKAKNIKQTELVADLREAILRVARHFQCTDPKNCSVELTPDYSMESHQRDHENYVACSRSHRRRAKALLDFERHDDDELGFRKNDIITIVSQKDEHCWVGELNGLRGWFPAKFVEVLDERSKEYSIAGDDSVTEGVTDLVRGTLCPALKALFEHGLKKPSLLGGACHPWLFIEEAAGREVERDFASVYSRLVLCKTFRLDEDGKVLTPEELLYRAVQSVNVTHDAVHAQMDVKLRSLICVGLNEQVLHLWLEVLCSSLPTVEKWYQPWSFLRSPGWVQIKCELRVLCCFAFSLSQDWELPAKREAQQPLKEGVRDMLVKHHLFSWDVDG.

The 192-residue stretch at 114-305 (GIPHGMRPQL…RIWDLFFYEG (192 aa)) folds into the Rab-GAP TBC domain. S406 is modified (phosphoserine). Residues 415-439 (EDDLEALKAKNIKQTELVADLREAI) adopt a coiled-coil conformation. The region spanning 480–539 (SHRRRAKALLDFERHDDDELGFRKNDIITIVSQKDEHCWVGELNGLRGWFPAKFVEVLDE) is the SH3 domain. Residues 555 to 718 (GVTDLVRGTL…FAFSLSQDWE (164 aa)) form the RUN domain.

It belongs to the small G protein signaling modulator family. In terms of assembly, interacts with GJA1. Interaction with GJA1 induces its degradation. Interacts via its RUN domain with the C-terminal region of NF2. Interacts with RAB3A, RAB4A, RAB5A, RAB8A, RAB11A, RAP1A, RAP1B, RAP2A, RAP2B and PDCD6IP. No interaction with RAB27A. Widely expressed.

It is found in the cytoplasm. In terms of biological role, may play a cooperative role in NF2-mediated growth suppression of cells. The polypeptide is Small G protein signaling modulator 3 (Homo sapiens (Human)).